Here is a 420-residue protein sequence, read N- to C-terminus: Serine hydroxymethyltransferase (420 aa).

(6S)-5,6,7,8-tetrahydrofolate-binding positions include Leu123 and 127–129 (GHL). Lys232 carries the post-translational modification N6-(pyridoxal phosphate)lysine. Position 357 to 359 (357 to 359 (SPF)) interacts with (6S)-5,6,7,8-tetrahydrofolate.

The protein belongs to the SHMT family. In terms of assembly, homodimer. The cofactor is pyridoxal 5'-phosphate.

The protein localises to the cytoplasm. The catalysed reaction is (6R)-5,10-methylene-5,6,7,8-tetrahydrofolate + glycine + H2O = (6S)-5,6,7,8-tetrahydrofolate + L-serine. It functions in the pathway one-carbon metabolism; tetrahydrofolate interconversion. The protein operates within amino-acid biosynthesis; glycine biosynthesis; glycine from L-serine: step 1/1. In terms of biological role, catalyzes the reversible interconversion of serine and glycine with tetrahydrofolate (THF) serving as the one-carbon carrier. This reaction serves as the major source of one-carbon groups required for the biosynthesis of purines, thymidylate, methionine, and other important biomolecules. Also exhibits THF-independent aldolase activity toward beta-hydroxyamino acids, producing glycine and aldehydes, via a retro-aldol mechanism. This is Serine hydroxymethyltransferase from Streptococcus pyogenes serotype M2 (strain MGAS10270).